The sequence spans 132 residues: Small ribosomal subunit protein uS12 (132 aa).

Position 89 is a 3-methylthioaspartic acid (Asp-89).

It belongs to the universal ribosomal protein uS12 family. Part of the 30S ribosomal subunit. Contacts proteins S8 and S17. May interact with IF1 in the 30S initiation complex.

With S4 and S5 plays an important role in translational accuracy. In terms of biological role, interacts with and stabilizes bases of the 16S rRNA that are involved in tRNA selection in the A site and with the mRNA backbone. Located at the interface of the 30S and 50S subunits, it traverses the body of the 30S subunit contacting proteins on the other side and probably holding the rRNA structure together. The combined cluster of proteins S8, S12 and S17 appears to hold together the shoulder and platform of the 30S subunit. The chain is Small ribosomal subunit protein uS12 from Campylobacter curvus (strain 525.92).